The sequence spans 140 residues: ATP synthase epsilon chain (140 aa).

This sequence belongs to the ATPase epsilon chain family. In terms of assembly, F-type ATPases have 2 components, CF(1) - the catalytic core - and CF(0) - the membrane proton channel. CF(1) has five subunits: alpha(3), beta(3), gamma(1), delta(1), epsilon(1). CF(0) has three main subunits: a, b and c.

The protein resides in the cell inner membrane. Its function is as follows. Produces ATP from ADP in the presence of a proton gradient across the membrane. This chain is ATP synthase epsilon chain, found in Colwellia psychrerythraea (strain 34H / ATCC BAA-681) (Vibrio psychroerythus).